A 296-amino-acid polypeptide reads, in one-letter code: Acetylglutamate kinase (296 aa).

Substrate is bound by residues 67 to 68 (GG), arginine 89, and asparagine 194.

This sequence belongs to the acetylglutamate kinase family. ArgB subfamily.

It localises to the cytoplasm. The enzyme catalyses N-acetyl-L-glutamate + ATP = N-acetyl-L-glutamyl 5-phosphate + ADP. Its pathway is amino-acid biosynthesis; L-arginine biosynthesis; N(2)-acetyl-L-ornithine from L-glutamate: step 2/4. Functionally, catalyzes the ATP-dependent phosphorylation of N-acetyl-L-glutamate. The chain is Acetylglutamate kinase from Brucella anthropi (strain ATCC 49188 / DSM 6882 / CCUG 24695 / JCM 21032 / LMG 3331 / NBRC 15819 / NCTC 12168 / Alc 37) (Ochrobactrum anthropi).